Reading from the N-terminus, the 230-residue chain is Small ribosomal subunit protein uS7m (230 aa).

Belongs to the universal ribosomal protein uS7 family. In terms of assembly, part of the small ribosomal subunit.

The protein localises to the mitochondrion. Functionally, one of the primary rRNA binding proteins, it binds directly to 18S rRNA where it nucleates assembly of the head domain of the small subunit. In Marchantia polymorpha (Common liverwort), this protein is Small ribosomal subunit protein uS7m (RPS7).